A 192-amino-acid chain; its full sequence is Ion-translocating oxidoreductase complex subunit B (192 aa).

The tract at residues 1-26 (MNAIWIAVAAVSLLALAFGAILGYAS) is hydrophobic. A 4Fe-4S domain is found at 32–91 (EDDPVVEKIDEILPQSQCGQCGYPGCRPYAEAISCNGEKINRCAPGGEAVMLKIAELLNV). [4Fe-4S] cluster is bound by residues C49, C52, C57, C74, C117, C120, C123, C127, C147, C150, C153, and C157. 4Fe-4S ferredoxin-type domains follow at residues 108-137 (MVAVIDENNCIGCTKCIQACPVDAIVGATR) and 138-167 (AMHTVMSDLCTGCNLCVDPCPTHCISLQPV).

Belongs to the 4Fe4S bacterial-type ferredoxin family. RnfB subfamily. As to quaternary structure, the complex is composed of six subunits: RsxA, RsxB, RsxC, RsxD, RsxE and RsxG. The cofactor is [4Fe-4S] cluster.

Its subcellular location is the cell inner membrane. In terms of biological role, part of a membrane-bound complex that couples electron transfer with translocation of ions across the membrane. Required to maintain the reduced state of SoxR. This is Ion-translocating oxidoreductase complex subunit B from Escherichia coli O81 (strain ED1a).